A 121-amino-acid chain; its full sequence is Heimdall profilin (121 aa).

Belongs to the Asgard profilin family.

The protein localises to the cytoplasm. It is found in the cytoskeleton. Binds to actin and affects the structure of the cytoskeleton. At high concentrations inhibits spontaneous rabbit actin nucleation. This strongly suggests this archaea has a profilin-regulated actin system, and actin-type genes can be identified in this organism. The polypeptide is Heimdall profilin (Heimdallarchaeota archaeon (strain LC_2)).